Here is a 2157-residue protein sequence, read N- to C-terminus: Polyketide synthase 2 (2157 aa).

Residues 7 to 244 (FIFGDQTGGF…IPIPIWAPYH (238 aa)) form an N-terminal acylcarrier protein transacylase domain (SAT) region. In terms of domain architecture, Ketosynthase family 3 (KS3) spans 374–807 (DSKIAIIGMS…GGNSALLLED (434 aa)). Residues Cys546, His681, and His723 each act as for beta-ketoacyl synthase activity in the active site. Residues 908–1213 (GFVFSGQGAQ…ASLHRKDDGW (306 aa)) are malonyl-CoA:ACP transacylase (MAT) domain. The For acyl/malonyl transferase activity role is filled by Ser998. Positions 1290–1605 (TSSVQKIIRQ…RSLLNKVLPP (316 aa)) are product template (PT) domain. An N-terminal hotdog fold region spans residues 1294–1428 (QKIIRQTDGP…CLLRFADPTS (135 aa)). Positions 1294-1600 (QKIIRQTDGP…FLGMSRSLLN (307 aa)) constitute a PKS/mFAS DH domain. The active-site Proton acceptor; for dehydratase activity is His1327. The segment at 1455–1600 (TDSLLSRGIV…FLGMSRSLLN (146 aa)) is C-terminal hotdog fold. Asp1514 serves as the catalytic Proton donor; for dehydratase activity. A disordered region spans residues 1626–1652 (AASAKDTERRPLDIPTRAQRQPSSAQT). The span at 1643-1652 (AQRQPSSAQT) shows a compositional bias: polar residues. In terms of domain architecture, Carrier 1 spans 1649–1726 (SAQTGTMGRI…ELKAFLGADQ (78 aa)). The residue at position 1686 (Ser1686) is an O-(pantetheine 4'-phosphoryl)serine. The segment at 1733 to 1762 (ACESSNGQHTPQTSDKGSGTLAVQKTDDDT) is disordered. A compositionally biased stretch (polar residues) spans 1735 to 1755 (ESSNGQHTPQTSDKGSGTLAV). The region spanning 1765 to 1839 (DMTLNRVCAI…SLQKALCGSE (75 aa)) is the Carrier 2 domain. The residue at position 1799 (Ser1799) is an O-(pantetheine 4'-phosphoryl)serine. The interval 1840-1859 (AASNGAPEANETTPSSHRLE) is disordered. Positions 1875 to 2151 (ASPPHATSIL…MIEMGNLIGE (277 aa)) are thioesterase (TE) domain. Ser1981 functions as the For thioesterase activity in the catalytic mechanism.

Its function is as follows. Polyketide synthase; part of the Pks2 gene cluster that mediates the formation of infectious structures (appressoria), enabling these fungi to kill insects faster. The product of the Pks2 gene cluster is different from the one of Pks1 and has still not been identified. The protein is Polyketide synthase 2 of Metarhizium robertsii (strain ARSEF 23 / ATCC MYA-3075) (Metarhizium anisopliae (strain ARSEF 23)).